The sequence spans 1191 residues: uncharacterized protein (1191 aa).

WD repeat units follow at residues 558–588 (GHRD…HLWT), 599–629 (GHTG…KIWD), 640–670 (GHQD…RLWH), 682–712 (GHTK…RLWD), 723–753 (LPEV…RLWT), 764–794 (GHDE…IHWS), 805–835 (GYPE…KVWD), 995–1025 (QRKE…TLWN), 1036–1066 (AHGD…KIWS), 1077–1107 (SDPL…RLWD), and 1118–1148 (STSG…QSWP).

This is an uncharacterized protein from Synechocystis sp. (strain ATCC 27184 / PCC 6803 / Kazusa).